A 296-amino-acid polypeptide reads, in one-letter code: Dof zinc finger protein DOF3.7 (296 aa).

The segment at 41–69 is disordered; the sequence is NTRPNATASNGGSGGNTNNTATMETRKAR. Residues 45–62 show a composition bias toward low complexity; that stretch reads NATASNGGSGGNTNNTAT. The segment at 74 to 128 adopts a Dof-type zinc-finger fold; that stretch reads VNCPRCNSTNTKFCYYNNYSLTQPRYFCKGCRRYWTEGGSLRNVPVGGSSRKNKR. The Zn(2+) site is built by Cys76, Cys79, Cys101, and Cys104. Residues 115-146 form a disordered region; it reads RNVPVGGSSRKNKRSSTPLASPSNPKLPDLNP. Polar residues predominate over residues 129–138; the sequence is SSTPLASPSN.

As to expression, expressed in the phloem of the mother plant, including in roots, stem, leaves and flowers, but not present in the seed and embryo. In maturing siliques, found all through the funiculus connecting the placenta to the ovule, but not in the ovule.

The protein resides in the nucleus. In terms of biological role, transcription factor specifically involved in the maternal control of seed germination. Regulates transcription by binding to a 5'-AA[AG]G-3' consensus core sequence. May ensure the inactivity of a component that would be activated to trigger germination as a consequence of red light perception. This chain is Dof zinc finger protein DOF3.7 (DOF3.7), found in Arabidopsis thaliana (Mouse-ear cress).